Consider the following 360-residue polypeptide: Probable L-asparaginase 1 (360 aa).

The first 16 residues, 1-16, serve as a signal peptide directing secretion; that stretch reads MWRSIISFLFFSVALC. Residues N27, N35, and N40 are each glycosylated (N-linked (GlcNAc...) asparagine). The Asparaginase/glutaminase domain occupies 39–359; it reads PNVTIFAMGG…QNITDIFSLE (321 aa). T49 functions as the O-isoaspartyl threonine intermediate in the catalytic mechanism. Residue N82 is glycosylated (N-linked (GlcNAc...) asparagine). S96 lines the substrate pocket. An N-linked (GlcNAc...) asparagine glycan is attached at N106. Residue 129-130 coordinates substrate; sequence TD. Residues N144, N179, N246, N302, and N351 are each glycosylated (N-linked (GlcNAc...) asparagine).

Belongs to the asparaginase 1 family.

It localises to the secreted. The protein resides in the cell wall. It carries out the reaction L-asparagine + H2O = L-aspartate + NH4(+). This chain is Probable L-asparaginase 1, found in Schizosaccharomyces pombe (strain 972 / ATCC 24843) (Fission yeast).